A 250-amino-acid chain; its full sequence is Replicating protein (250 aa).

Disordered stretches follow at residues 1-23 (MFQQ…PCEK) and 168-250 (KAHM…KAFE). 2 stretches are compositionally biased toward basic and acidic residues: residues 13 to 23 (GTDEPAHPCEK) and 178 to 190 (DRLR…RTRA). Residues 218-237 (SRCSFTTPNRPRRTLPSSHP) show a composition bias toward polar residues.

Functionally, required for replication. It likely regulates pTAR copy number. The chain is Replicating protein (repA) from Rhizobium radiobacter (Agrobacterium tumefaciens).